The following is a 130-amino-acid chain: Protein UL145 (130 aa).

Interacts with host DDB1; this interaction promotes STAT2 degradation.

Its function is as follows. Plays a role in the inhibition of host innate immunity by exploiting host DDB1-cullin RING ubiquitin ligases (CRLs). Mechanistically, recruits host DDB1 via a DCAF-like interaction motif to antagonize IFN signaling by STAT2 degradation. The protein is Protein UL145 (UL145) of Homo sapiens (Human).